Consider the following 225-residue polypeptide: Large ribosomal subunit protein uL4 (225 aa).

Residues 46 to 102 form a disordered region; that stretch reads KRQGTHATKGRGEVRGGGRKPFRQKGTGRARQGSIRAPHFTGGGTVHGPQPRDYSQR. Over residues 62–73 the composition is skewed to basic residues; sequence GGRKPFRQKGTG.

It belongs to the universal ribosomal protein uL4 family. As to quaternary structure, part of the 50S ribosomal subunit.

Functionally, one of the primary rRNA binding proteins, this protein initially binds near the 5'-end of the 23S rRNA. It is important during the early stages of 50S assembly. It makes multiple contacts with different domains of the 23S rRNA in the assembled 50S subunit and ribosome. In terms of biological role, forms part of the polypeptide exit tunnel. The protein is Large ribosomal subunit protein uL4 of Corynebacterium urealyticum (strain ATCC 43042 / DSM 7109).